We begin with the raw amino-acid sequence, 410 residues long: Class E basic helix-loop-helix protein 41 (410 aa).

A Glycyl lysine isopeptide (Lys-Gly) (interchain with G-Cter in SUMO2) cross-link involves residue K31. One can recognise a bHLH domain in the interval 44 to 99 (TYKLPHRLIEKKRRDRINECIAQLKDLLPEHLKLTTLGHLEKAVVLELTLKHLKAL). K121 is covalently cross-linked (Glycyl lysine isopeptide (Lys-Gly) (interchain with G-Cter in SUMO2)). Residues 131-166 (FHSGFQTCAKEVLQYLARFESWTPREPRCAQLVSHL) enclose the Orange domain. Disordered stretches follow at residues 209-255 (IQRT…KRPK) and 360-410 (GATA…KDAP). K240 is covalently cross-linked (Glycyl lysine isopeptide (Lys-Gly) (interchain with G-Cter in SUMO2)).

As to quaternary structure, homodimer. Heterodimer with BHLHE40/DEC1. Interacts with CIART. Interacts with BMAL1. Interacts with RXRA. Interacts with NR0B2 and HNF1A. Expressed in skeletal muscle, brain and lung.

It localises to the nucleus. Its function is as follows. Transcriptional repressor involved in the regulation of the circadian rhythm by negatively regulating the activity of the clock genes and clock-controlled genes. Acts as the negative limb of a novel autoregulatory feedback loop (DEC loop) which differs from the one formed by the PER and CRY transcriptional repressors (PER/CRY loop). Both these loops are interlocked as it represses the expression of PER1 and in turn is repressed by PER1/2 and CRY1/2. Represses the activity of the circadian transcriptional activator: CLOCK-BMAL1 heterodimer by competing for the binding to E-box elements (5'-CACGTG-3') found within the promoters of its target genes. Negatively regulates its own expression and the expression of DBP and BHLHE41/DEC2. Acts as a corepressor of RXR and the RXR-LXR heterodimers and represses the ligand-induced RXRA/B/G, NR1H3/LXRA, NR1H4 and VDR transactivation activity. Inhibits HNF1A-mediated transactivation of CYP1A2, CYP2E1 and CYP3A11. The protein is Class E basic helix-loop-helix protein 41 (Bhlhe41) of Mus musculus (Mouse).